The chain runs to 557 residues: Organic cation/carnitine transporter 2 (557 aa).

The Cytoplasmic segment spans residues 1 to 20; sequence MRDYDEVTAFLGEWGPFQRL. A helical membrane pass occupies residues 21-41; the sequence is IFFLLSASIIPNGFNGMSIVF. The Extracellular segment spans residues 42-142; the sequence is LAGTPEHRCL…DLVCKDDWKA (101 aa). N-linked (GlcNAc...) asparagine glycosylation is found at asparagine 57, asparagine 64, and asparagine 91. A helical transmembrane segment spans residues 143 to 163; that stretch reads PLTTSLFFVGVLMGSFISGQL. The Cytoplasmic portion of the chain corresponds to 164–172; it reads SDRFGRKNV. The chain crosses the membrane as a helical span at residues 173–193; sequence LFLTMGMQTGFSFLQLFSVNF. The Extracellular portion of the chain corresponds to 194–197; that stretch reads EMFT. A helical membrane pass occupies residues 198-218; the sequence is VLFVLVGMGQISNYVAAFVLG. 218–225 provides a ligand contact to ATP; sequence GTEILSKS. Residues 219-232 are Cytoplasmic-facing; it reads TEILSKSIRIIFAT. A helical transmembrane segment spans residues 233–253; the sequence is LGVCIFYAFGFMVLPLFAYFI. Topologically, residues 254 to 257 are extracellular; the sequence is RDWR. Residues 258 to 278 traverse the membrane as a helical segment; sequence MLLLALTVPGVLCGALWWFIP. The Cytoplasmic portion of the chain corresponds to 279-341; it reads ESPRWLISQG…YDLVRTRNIR (63 aa). Residues 342 to 362 form a helical membrane-spanning segment; that stretch reads IITIMSIILWLTISVGYFGLS. Topologically, residues 363-373 are extracellular; it reads LDTPNLHGDIY. A helical membrane pass occupies residues 374 to 394; it reads VNCFLLAAVEVPAYVLAWLLL. Over 395–406 the chain is Cytoplasmic; the sequence is QHLPRRYSISAA. A helical transmembrane segment spans residues 407-427; it reads LFLGGSVLLFIQLVPSELFYL. At 428–430 the chain is on the extracellular side; sequence STA. A helical membrane pass occupies residues 431-451; the sequence is LVMVGKFGITSAYSMVYVYTA. The Cytoplasmic portion of the chain corresponds to 452–462; that stretch reads ELYPTVVRNMG. The helical transmembrane segment at 463-483 threads the bilayer; that stretch reads VGVSSTASRLGSILSPYFVYL. At 484–488 the chain is on the extracellular side; that stretch reads GAYDR. The residue at position 486 (tyrosine 486) is a Phosphotyrosine. The helical transmembrane segment at 489–509 threads the bilayer; that stretch reads FLPYILMGSLTILTAILTLFF. Residues 510 to 557 are Cytoplasmic-facing; sequence PESFGAPLPDTIDQMLRVKGIKQWQIQSQTRTQKDGGESPTVLKSTAF. The segment at 537-557 is disordered; it reads SQTRTQKDGGESPTVLKSTAF. Position 548 is a phosphoserine (serine 548). Threonine 550 bears the Phosphothreonine mark.

Belongs to the major facilitator (TC 2.A.1) superfamily. Organic cation transporter (TC 2.A.1.19) family. In terms of assembly, interacts with PDZK1. In terms of tissue distribution, expressed in the proximal and distal tubules and in the glomeruli in the kidney, in the myocardium, valves, and arterioles in the heart, in the labyrinthine layer of the placenta, and in the cortex, hippocampus, and cerebellum in the brain. Expressed in Sertoli cells in testis.

The protein resides in the cell membrane. It localises to the apical cell membrane. Its subcellular location is the basal cell membrane. It catalyses the reaction (R)-carnitine(out) + Na(+)(out) = (R)-carnitine(in) + Na(+)(in). The catalysed reaction is O-acetyl-(R)-carnitine(out) + Na(+)(out) = O-acetyl-(R)-carnitine(in) + Na(+)(in). It carries out the reaction O-propanoyl-(R)-carnitine(out) + Na(+)(out) = O-propanoyl-(R)-carnitine(in) + Na(+)(in). The enzyme catalyses glycine betaine(out) + Na(+)(out) = glycine betaine(in) + Na(+)(in). It catalyses the reaction glycine betaine(out) + (R)-carnitine(in) = glycine betaine(in) + (R)-carnitine(out). The catalysed reaction is O-butanoyl-(R)-carnitine(out) + Na(+)(out) = O-butanoyl-(R)-carnitine(in) + Na(+)(in). It carries out the reaction (S)-carnitine(out) + Na(+)(out) = (S)-carnitine(in) + Na(+)(in). The enzyme catalyses an O-acyl-(R)-carnitine(out) + Na(+)(out) = an O-acyl-(R)-carnitine(in) + Na(+)(in). It catalyses the reaction L-glutamyl-L-arginyl-glycyl-L-methionyl-L-threonine(out) + Na(+)(out) = L-glutamyl-L-arginyl-glycyl-L-methionyl-L-threonine(in) + Na(+)(in). The catalysed reaction is N,N-dimethylglycine(out) + Na(+)(out) = N,N-dimethylglycine(in) + Na(+)(in). With respect to regulation, inhibited by emetine, quinidine and verapamil. The IC(50) of emetine is 4.2 uM. Not inhibited by valproic acid. Transport of (R)-carnitine is stimulated by cholesterol in the plasma membrane. Functionally, sodium-ion dependent, high affinity carnitine transporter. Involved in the active cellular uptake of carnitine. Transports one sodium ion with one molecule of carnitine. Also transports organic cations such as tetraethylammonium (TEA) without the involvement of sodium. Also relative uptake activity ratio of carnitine to TEA is 11.3. May also contribute to regulate the transport of organic compounds in testis across the blood-testis-barrier. This is Organic cation/carnitine transporter 2 (Slc22a5) from Rattus norvegicus (Rat).